We begin with the raw amino-acid sequence, 328 residues long: Ketol-acid reductoisomerase (NADP(+)) (328 aa).

The 180-residue stretch at 2–181 folds into the KARI N-terminal Rossmann domain; the sequence is AKIYRETDAD…GFTRVGVIET (180 aa). Residues 25 to 28, Arg-48, Ser-52, and 82 to 85 each bind NADP(+); these read YGIQ and DMVQ. His-107 is an active-site residue. An NADP(+)-binding site is contributed by Gly-133. The KARI C-terminal knotted domain maps to 182 to 327; the sequence is TFAEETETDL…EDLRRLMRSG (146 aa). Residues Asp-190, Glu-194, Glu-226, and Glu-230 each contribute to the Mg(2+) site. A substrate-binding site is contributed by Ser-251.

Belongs to the ketol-acid reductoisomerase family. Requires Mg(2+) as cofactor.

It catalyses the reaction (2R)-2,3-dihydroxy-3-methylbutanoate + NADP(+) = (2S)-2-acetolactate + NADPH + H(+). The enzyme catalyses (2R,3R)-2,3-dihydroxy-3-methylpentanoate + NADP(+) = (S)-2-ethyl-2-hydroxy-3-oxobutanoate + NADPH + H(+). It participates in amino-acid biosynthesis; L-isoleucine biosynthesis; L-isoleucine from 2-oxobutanoate: step 2/4. The protein operates within amino-acid biosynthesis; L-valine biosynthesis; L-valine from pyruvate: step 2/4. In terms of biological role, involved in the biosynthesis of branched-chain amino acids (BCAA). Catalyzes an alkyl-migration followed by a ketol-acid reduction of (S)-2-acetolactate (S2AL) to yield (R)-2,3-dihydroxy-isovalerate. In the isomerase reaction, S2AL is rearranged via a Mg-dependent methyl migration to produce 3-hydroxy-3-methyl-2-ketobutyrate (HMKB). In the reductase reaction, this 2-ketoacid undergoes a metal-dependent reduction by NADPH to yield (R)-2,3-dihydroxy-isovalerate. This is Ketol-acid reductoisomerase (NADP(+)) from Caldivirga maquilingensis (strain ATCC 700844 / DSM 13496 / JCM 10307 / IC-167).